Here is a 357-residue protein sequence, read N- to C-terminus: Histidine biosynthesis bifunctional protein HisB (357 aa).

The segment at Met1 to Asp168 is histidinol-phosphatase. Catalysis depends on Asp9, which acts as the Nucleophile. Residues Asp9 and Asp11 each contribute to the Mg(2+) site. Residue Asp11 is the Proton donor of the active site. Residues Cys93, His95, Cys101, and Cys103 each contribute to the Zn(2+) site. Asp130 contributes to the Mg(2+) binding site. The imidazoleglycerol-phosphate dehydratase stretch occupies residues Arg169 to Leu357.

This sequence in the N-terminal section; belongs to the histidinol-phosphatase family. It in the C-terminal section; belongs to the imidazoleglycerol-phosphate dehydratase family. Mg(2+) serves as cofactor. Zn(2+) is required as a cofactor.

It is found in the cytoplasm. It catalyses the reaction D-erythro-1-(imidazol-4-yl)glycerol 3-phosphate = 3-(imidazol-4-yl)-2-oxopropyl phosphate + H2O. The catalysed reaction is L-histidinol phosphate + H2O = L-histidinol + phosphate. It functions in the pathway amino-acid biosynthesis; L-histidine biosynthesis; L-histidine from 5-phospho-alpha-D-ribose 1-diphosphate: step 6/9. It participates in amino-acid biosynthesis; L-histidine biosynthesis; L-histidine from 5-phospho-alpha-D-ribose 1-diphosphate: step 8/9. The polypeptide is Histidine biosynthesis bifunctional protein HisB (Buchnera aphidicola subsp. Baizongia pistaciae (strain Bp)).